The sequence spans 143 residues: Hemoglobin subunit alpha-2 (143 aa).

S2 is subject to N-acetylserine. One can recognise a Globin domain in the interval 2–143 (SLSSKQKATV…LALALAEKYR (142 aa)). H60 provides a ligand contact to O2. H89 serves as a coordination point for heme b.

It belongs to the globin family. In terms of assembly, hb 2 is a heterotetramer of two alpha-2 and two beta-2 chains. Red blood cells.

Involved in oxygen transport from gills to the various peripheral tissues. This Gadus morhua (Atlantic cod) protein is Hemoglobin subunit alpha-2 (hba2).